A 491-amino-acid chain; its full sequence is Phosphatidylglycerol--prolipoprotein diacylglyceryl transferase (491 aa).

Transmembrane regions (helical) follow at residues 24-44, 58-78, and 98-118; these read IPLRAYALCIILGIVVAIWWG, VLDVAMFAVPFGLIGGRAYHV, and IWQGGLGIWGAVFLGGIGAWI. Position 146 (Arg-146) interacts with a 1,2-diacyl-sn-glycero-3-phospho-(1'-sn-glycerol). A run of 2 helical transmembrane segments spans residues 192 to 212 and 256 to 276; these read IVHPTFLYELLWNVLVVIALV and INNFTSALVFLAAIAYFVFAT. The segment covering 309 to 323 has biased composition (low complexity); the sequence is NGPAEPGATASTATD. Positions 309-491 are disordered; that stretch reads NGPAEPGATA…DRVDSGENDA (183 aa). Positions 347–360 are enriched in basic and acidic residues; sequence KGDRGTADAADTAK. Composition is skewed to low complexity over residues 361–387, 394–406, and 415–438; these read DASATDSASNSASATDSDFGETAGSSD, AVKAASGATAAEK, and AGEAAADTSAADQPAADKSGSAKS. Residues 453-462 are compositionally biased toward basic and acidic residues; it reads NESESTRDNE. The span at 463-481 shows a compositional bias: low complexity; sequence STSAGTAASATGSAGAGAT. Residues 482–491 show a composition bias toward basic and acidic residues; the sequence is DRVDSGENDA.

The protein belongs to the Lgt family.

The protein localises to the cell membrane. The enzyme catalyses L-cysteinyl-[prolipoprotein] + a 1,2-diacyl-sn-glycero-3-phospho-(1'-sn-glycerol) = an S-1,2-diacyl-sn-glyceryl-L-cysteinyl-[prolipoprotein] + sn-glycerol 1-phosphate + H(+). The protein operates within protein modification; lipoprotein biosynthesis (diacylglyceryl transfer). Catalyzes the transfer of the diacylglyceryl group from phosphatidylglycerol to the sulfhydryl group of the N-terminal cysteine of a prolipoprotein, the first step in the formation of mature lipoproteins. This is Phosphatidylglycerol--prolipoprotein diacylglyceryl transferase from Nocardia farcinica (strain IFM 10152).